The following is a 336-amino-acid chain: Type II methyltransferase M.PvuII (336 aa).

2 consecutive repeat copies span residues 11–113 (SNDM…IYNF) and 181–293 (SDRM…WISF). The tract at residues 196–215 (TPKTRPSGHDIGKSFSKDNG) is disordered. Residues 202-211 (SGHDIGKSFS) show a composition bias toward basic and acidic residues.

Belongs to the N(4)/N(6)-methyltransferase family. N(4) subfamily. In terms of assembly, monomer.

The catalysed reaction is a 2'-deoxycytidine in DNA + S-adenosyl-L-methionine = an N(4)-methyl-2'-deoxycytidine in DNA + S-adenosyl-L-homocysteine + H(+). Its function is as follows. A beta subtype methylase, recognizes the double-stranded sequence 5'-CAGCTG-3', methylates C-4 on both strands, and protects the DNA from cleavage by the PvuII endonuclease. This chain is Type II methyltransferase M.PvuII, found in Proteus hauseri.